The sequence spans 143 residues: Large ribosomal subunit protein uL11 (143 aa).

Belongs to the universal ribosomal protein uL11 family. In terms of assembly, part of the ribosomal stalk of the 50S ribosomal subunit. Interacts with L10 and the large rRNA to form the base of the stalk. L10 forms an elongated spine to which L12 dimers bind in a sequential fashion forming a multimeric L10(L12)X complex. In terms of processing, one or more lysine residues are methylated.

Forms part of the ribosomal stalk which helps the ribosome interact with GTP-bound translation factors. The chain is Large ribosomal subunit protein uL11 from Burkholderia ambifaria (strain MC40-6).